Reading from the N-terminus, the 489-residue chain is Glutamate--tRNA ligase (489 aa).

A 'HIGH' region motif is present at residues 10-20; the sequence is PSPTGFLHIGG. Residues 261–265 carry the 'KMSKS' region motif; that stretch reads KLSKR. Lysine 264 lines the ATP pocket.

It belongs to the class-I aminoacyl-tRNA synthetase family. Glutamate--tRNA ligase type 1 subfamily. Monomer.

It is found in the cytoplasm. The catalysed reaction is tRNA(Glu) + L-glutamate + ATP = L-glutamyl-tRNA(Glu) + AMP + diphosphate. Functionally, catalyzes the attachment of glutamate to tRNA(Glu) in a two-step reaction: glutamate is first activated by ATP to form Glu-AMP and then transferred to the acceptor end of tRNA(Glu). The sequence is that of Glutamate--tRNA ligase from Finegoldia magna (strain ATCC 29328 / DSM 20472 / WAL 2508) (Peptostreptococcus magnus).